The sequence spans 879 residues: Leucine--tRNA ligase (879 aa).

The 'HIGH' region signature appears at 46–56 (PYPSGALHMGH). A 'KMSKS' region motif is present at residues 638–642 (KMSKS). Lys-641 contacts ATP.

Belongs to the class-I aminoacyl-tRNA synthetase family.

It is found in the cytoplasm. The enzyme catalyses tRNA(Leu) + L-leucine + ATP = L-leucyl-tRNA(Leu) + AMP + diphosphate. The chain is Leucine--tRNA ligase from Xanthomonas campestris pv. campestris (strain 8004).